A 433-amino-acid polypeptide reads, in one-letter code: Protein disulfide-isomerase A6 homolog (433 aa).

Positions M1–A19 are cleaved as a signal peptide. 2 Thioredoxin domains span residues F20–T119 and A120–A267. Active-site nucleophile residues include C55, C58, C186, and C189. 2 disulfide bridges follow: C55–C58 and C186–C189. N279 carries N-linked (GlcNAc...) asparagine glycosylation. The disordered stretch occupies residues V405–L433. Residues T417 to L433 are compositionally biased toward acidic residues. The Prevents secretion from ER motif lies at K430–L433.

The protein belongs to the protein disulfide isomerase family. As to quaternary structure, interacts with Drpr (via extracellular region). In terms of tissue distribution, in the blastoderm embryo, expression starts at the anterior and posterior poles and later appears as broad stripes. Following gastrulation, expressed in midline precursor cells and the posterior head with low levels present throughout the embryo. During germ band extension, weak dorsoventral stripes of expression are evident. Midline expression begins and is retained throughout embryogenesis in clusters of cells in each segment in the central nervous system. At least some of the midline expression occurs in VUM neurons.

It is found in the endoplasmic reticulum lumen. The protein resides in the cell surface. It carries out the reaction Catalyzes the rearrangement of -S-S- bonds in proteins.. Binds to both apoptotic cells and phagocytes and promotes Drpr-dependent phagocytosis of apoptotic cells. This chain is Protein disulfide-isomerase A6 homolog, found in Drosophila melanogaster (Fruit fly).